Consider the following 429-residue polypeptide: Adenylosuccinate synthetase (429 aa).

Residues 12-18 (GDEGKGK) and 40-42 (GHT) each bind GTP. Residue Asp-13 is the Proton acceptor of the active site. The Mg(2+) site is built by Asp-13 and Gly-40. Residues 13–16 (DEGK), 38–41 (NAGH), Thr-129, Arg-143, Gln-224, Thr-239, and Arg-303 contribute to the IMP site. His-41 serves as the catalytic Proton donor. Residue 299 to 305 (ATTGRKR) participates in substrate binding. Residues Arg-305, 331–333 (KLD), and 413–415 (SVG) each bind GTP.

It belongs to the adenylosuccinate synthetase family. In terms of assembly, homodimer. The cofactor is Mg(2+).

It is found in the cytoplasm. The catalysed reaction is IMP + L-aspartate + GTP = N(6)-(1,2-dicarboxyethyl)-AMP + GDP + phosphate + 2 H(+). Its pathway is purine metabolism; AMP biosynthesis via de novo pathway; AMP from IMP: step 1/2. Functionally, plays an important role in the de novo pathway of purine nucleotide biosynthesis. Catalyzes the first committed step in the biosynthesis of AMP from IMP. In Desulfosudis oleivorans (strain DSM 6200 / JCM 39069 / Hxd3) (Desulfococcus oleovorans), this protein is Adenylosuccinate synthetase.